Reading from the N-terminus, the 142-residue chain is Large ribosomal subunit protein uL13 (142 aa).

It belongs to the universal ribosomal protein uL13 family. In terms of assembly, part of the 50S ribosomal subunit.

Its function is as follows. This protein is one of the early assembly proteins of the 50S ribosomal subunit, although it is not seen to bind rRNA by itself. It is important during the early stages of 50S assembly. This is Large ribosomal subunit protein uL13 from Caldicellulosiruptor bescii (strain ATCC BAA-1888 / DSM 6725 / KCTC 15123 / Z-1320) (Anaerocellum thermophilum).